Here is a 218-residue protein sequence, read N- to C-terminus: Adenylate kinase (218 aa).

Gly-10–Thr-15 contributes to the ATP binding site. The tract at residues Ser-30–Val-59 is NMP. Residues Thr-31, Arg-36, Ser-57–Val-59, Gly-85–Arg-88, and Gln-92 each bind AMP. Residues Gly-122–Asp-159 form an LID region. ATP is bound by residues Arg-123 and Thr-132–Tyr-133. Arg-156 and Arg-167 together coordinate AMP. Residue Gly-203 participates in ATP binding.

Belongs to the adenylate kinase family. In terms of assembly, monomer.

The protein resides in the cytoplasm. It carries out the reaction AMP + ATP = 2 ADP. It functions in the pathway purine metabolism; AMP biosynthesis via salvage pathway; AMP from ADP: step 1/1. Its function is as follows. Catalyzes the reversible transfer of the terminal phosphate group between ATP and AMP. Plays an important role in cellular energy homeostasis and in adenine nucleotide metabolism. The sequence is that of Adenylate kinase from Verminephrobacter eiseniae (strain EF01-2).